Consider the following 367-residue polypeptide: Glutamate 5-kinase (367 aa).

K9 serves as a coordination point for ATP. S49, D136, and N148 together coordinate substrate. Residues 168-169 (TD) and 210-216 (TGGMKSK) each bind ATP. One can recognise a PUA domain in the interval 276–350 (SGQIEIDAGA…GMQSQQIQAR (75 aa)).

Belongs to the glutamate 5-kinase family.

It localises to the cytoplasm. The enzyme catalyses L-glutamate + ATP = L-glutamyl 5-phosphate + ADP. Its pathway is amino-acid biosynthesis; L-proline biosynthesis; L-glutamate 5-semialdehyde from L-glutamate: step 1/2. In terms of biological role, catalyzes the transfer of a phosphate group to glutamate to form L-glutamate 5-phosphate. The protein is Glutamate 5-kinase of Bacillus anthracis.